The primary structure comprises 136 residues: Putative pre-16S rRNA nuclease (136 aa).

Belongs to the YqgF nuclease family.

It is found in the cytoplasm. Could be a nuclease involved in processing of the 5'-end of pre-16S rRNA. This Francisella philomiragia subsp. philomiragia (strain ATCC 25017 / CCUG 19701 / FSC 153 / O#319-036) protein is Putative pre-16S rRNA nuclease.